Here is a 260-residue protein sequence, read N- to C-terminus: Cytochrome c oxidase subunit 2 (260 aa).

Residues 1-43 (MILRLLECRFFTIALCDAAEPWQLGFQDAATPMMQGIIDLHHD) are Mitochondrial intermembrane-facing. Residues 44–64 (IFFFLILILVFVLWMLVRALW) traverse the membrane as a helical segment. Residues 65 to 84 (HFNEQTNPIPQRIVHGTTIE) are Mitochondrial matrix-facing. The chain crosses the membrane as a helical span at residues 85 to 105 (IIWTIFPSVILLFIAIPSFAL). At 106–260 (LYSMDGVLVD…VSNQLILQTN (155 aa)) the chain is on the mitochondrial intermembrane side. The Cu cation site is built by H189, C224, E226, C228, H232, and M235. Mg(2+) is bound at residue E226.

Belongs to the cytochrome c oxidase subunit 2 family. As to quaternary structure, component of the cytochrome c oxidase (complex IV, CIV), a multisubunit enzyme composed of a catalytic core of 3 subunits and several supernumerary subunits. The complex exists as a monomer or a dimer and forms supercomplexes (SCs) in the inner mitochondrial membrane with ubiquinol-cytochrome c oxidoreductase (cytochrome b-c1 complex, complex III, CIII). It depends on Cu cation as a cofactor.

It is found in the mitochondrion inner membrane. The enzyme catalyses 4 Fe(II)-[cytochrome c] + O2 + 8 H(+)(in) = 4 Fe(III)-[cytochrome c] + 2 H2O + 4 H(+)(out). Functionally, component of the cytochrome c oxidase, the last enzyme in the mitochondrial electron transport chain which drives oxidative phosphorylation. The respiratory chain contains 3 multisubunit complexes succinate dehydrogenase (complex II, CII), ubiquinol-cytochrome c oxidoreductase (cytochrome b-c1 complex, complex III, CIII) and cytochrome c oxidase (complex IV, CIV), that cooperate to transfer electrons derived from NADH and succinate to molecular oxygen, creating an electrochemical gradient over the inner membrane that drives transmembrane transport and the ATP synthase. Cytochrome c oxidase is the component of the respiratory chain that catalyzes the reduction of oxygen to water. Electrons originating from reduced cytochrome c in the intermembrane space (IMS) are transferred via the dinuclear copper A center (CU(A)) of subunit 2 and heme A of subunit 1 to the active site in subunit 1, a binuclear center (BNC) formed by heme A3 and copper B (CU(B)). The BNC reduces molecular oxygen to 2 water molecules using 4 electrons from cytochrome c in the IMS and 4 protons from the mitochondrial matrix. This Zea mays (Maize) protein is Cytochrome c oxidase subunit 2 (COX2).